The sequence spans 453 residues: Tryptophan biosynthesis protein TrpCF (453 aa).

The segment at 1-257 is indole-3-glycerol phosphate synthase; sequence MMQTVLAKIV…AAVRRVLLGE (257 aa). The N-(5'-phosphoribosyl)anthranilate isomerase stretch occupies residues 258–453; it reads NKVCGLTRGQ…ASVFQTLRAY (196 aa).

In the N-terminal section; belongs to the TrpC family. This sequence in the C-terminal section; belongs to the TrpF family. In terms of assembly, monomer.

The enzyme catalyses N-(5-phospho-beta-D-ribosyl)anthranilate = 1-(2-carboxyphenylamino)-1-deoxy-D-ribulose 5-phosphate. It catalyses the reaction 1-(2-carboxyphenylamino)-1-deoxy-D-ribulose 5-phosphate + H(+) = (1S,2R)-1-C-(indol-3-yl)glycerol 3-phosphate + CO2 + H2O. It participates in amino-acid biosynthesis; L-tryptophan biosynthesis; L-tryptophan from chorismate: step 3/5. The protein operates within amino-acid biosynthesis; L-tryptophan biosynthesis; L-tryptophan from chorismate: step 4/5. Its function is as follows. Bifunctional enzyme that catalyzes two sequential steps of tryptophan biosynthetic pathway. The first reaction is catalyzed by the isomerase, coded by the TrpF domain; the second reaction is catalyzed by the synthase, coded by the TrpC domain. The polypeptide is Tryptophan biosynthesis protein TrpCF (trpC) (Escherichia coli (strain K12)).